A 287-amino-acid chain; its full sequence is Universal stress protein Slr1230 (287 aa).

It belongs to the universal stress protein A family.

This is Universal stress protein Slr1230 from Synechocystis sp. (strain ATCC 27184 / PCC 6803 / Kazusa).